Reading from the N-terminus, the 442-residue chain is MTRVKTVMTNENNKYDFIFKGINLTKSIFIVGLVIRLVLIVFAEWQDANMLVKYTDIDYVVYTDASRAVVNGLSPYDRSTYRYTPLLAYLLVPNILIHPAFGKLLFVICDMIIAYLLKGILLERFPKITSRTLLICLASWLLNPFSINVSTRGNAESVIGAMVLASFYFLTKKNLTLASIFYGLSVHFKIYPIIYSIPMYLYIDENFFSRKPSEYTSLNNNFKNIFKNFFNKNRLKFFLISAFTFISLTFIMYLIYGYIFLFETYLYHVIRADNRHNFSVYFYQIYLNTPIVETVGDLVGKVNGSNMIVALASFLPQVILLLAITLVYFNDLEFCLLLETITFVAFNKVCTVQYFIWYYSILPLVIPSSSLGLVQYIILFAVWMGSQGLWFYSAFNLEFLGLQTFWNIWVAGLLFFIANIYILVKLILNHNPIKVNQYLKSK.

8 consecutive transmembrane segments (helical) span residues 22–42, 95–115, 177–197, 242–262, 307–327, 336–356, 361–381, and 408–428; these read INLT…LIVF, ILIH…IIAY, LASI…IYSI, AFTF…IFLF, MIVA…ITLV, LLLE…QYFI, ILPL…ILFA, and IWVA…KLIL.

The protein belongs to the PIGM family.

Its subcellular location is the endoplasmic reticulum membrane. It functions in the pathway glycolipid biosynthesis; glycosylphosphatidylinositol-anchor biosynthesis. Mannosyltransferase involved in glycosylphosphatidylinositol-anchor biosynthesis. Transfers the first alpha-1,4-mannose to GlcN-acyl-PI during GPI precursor assembly. The sequence is that of GPI mannosyltransferase 1 (pigm) from Dictyostelium discoideum (Social amoeba).